The sequence spans 876 residues: Alanine--tRNA ligase (876 aa).

Residues His565, His569, Cys667, and His671 each coordinate Zn(2+).

It belongs to the class-II aminoacyl-tRNA synthetase family. Requires Zn(2+) as cofactor.

It is found in the cytoplasm. The catalysed reaction is tRNA(Ala) + L-alanine + ATP = L-alanyl-tRNA(Ala) + AMP + diphosphate. Catalyzes the attachment of alanine to tRNA(Ala) in a two-step reaction: alanine is first activated by ATP to form Ala-AMP and then transferred to the acceptor end of tRNA(Ala). Also edits incorrectly charged Ser-tRNA(Ala) and Gly-tRNA(Ala) via its editing domain. The polypeptide is Alanine--tRNA ligase (Staphylococcus epidermidis (strain ATCC 35984 / DSM 28319 / BCRC 17069 / CCUG 31568 / BM 3577 / RP62A)).